Reading from the N-terminus, the 182-residue chain is Meiotically up-regulated gene 82 protein (182 aa).

The disordered stretch occupies residues Glu-161–Asp-182. Positions Tyr-169–Asp-182 are enriched in basic residues.

The protein belongs to the prokaryotic/mitochondrial release factor family.

Its subcellular location is the mitochondrion. In terms of biological role, has a role in meiosis. The sequence is that of Meiotically up-regulated gene 82 protein (mug82) from Schizosaccharomyces pombe (strain 972 / ATCC 24843) (Fission yeast).